The following is a 196-amino-acid chain: uncharacterized protein (196 aa).

CBS domains follow at residues 10–69 and 76–132; these read ARRD…NPDE and MSQP…LVAT. Residues 153–187 enclose the ACP-type MB domain; it reads IIEGVCDLCETYSEELRFVDGVWVCPECYEDILGR. 4 residues coordinate Fe cation: Cys158, Cys161, Cys177, and Cys180. Cys158, Cys161, Cys177, and Cys180 together coordinate Zn(2+).

This is an uncharacterized protein from Methanopyrus kandleri (strain AV19 / DSM 6324 / JCM 9639 / NBRC 100938).